The chain runs to 677 residues: Methionine--tRNA ligase (677 aa).

Positions 15 to 25 (PYANGSIHLGH) match the 'HIGH' region motif. The Zn(2+) site is built by Cys146, Cys149, Cys159, and Cys162. Positions 333-337 (KMSKS) match the 'KMSKS' region motif. An ATP-binding site is contributed by Lys336. One can recognise a tRNA-binding domain in the interval 575–677 (DFAKIDLRVA…DGAKPGQQVK (103 aa)).

The protein belongs to the class-I aminoacyl-tRNA synthetase family. MetG type 1 subfamily. As to quaternary structure, homodimer. It depends on Zn(2+) as a cofactor.

The protein resides in the cytoplasm. The catalysed reaction is tRNA(Met) + L-methionine + ATP = L-methionyl-tRNA(Met) + AMP + diphosphate. Its function is as follows. Is required not only for elongation of protein synthesis but also for the initiation of all mRNA translation through initiator tRNA(fMet) aminoacylation. The polypeptide is Methionine--tRNA ligase (Salmonella agona (strain SL483)).